The following is a 405-amino-acid chain: Cellobiose 2-epimerase (405 aa).

Belongs to the cellobiose 2-epimerase family.

The enzyme catalyses D-cellobiose = beta-D-glucosyl-(1-&gt;4)-D-mannopyranose. Functionally, catalyzes the reversible epimerization of cellobiose to 4-O-beta-D-glucopyranosyl-D-mannose (Glc-Man). Can also epimerize lactose to epilactose. The chain is Cellobiose 2-epimerase (ce13) from Eubacterium cellulosolvens.